Reading from the N-terminus, the 332-residue chain is MASTASFMLAVLLAVAVAAAPARAVRCPPSDKQALMRVKQSLGNPATLSTWSLASADCCEWDHVRCDEAGRVNNVFIDGANDVRGQIPSAVAGLTALMSLSLFRLPGLSGPIPACLTALSNLQFLTISHTNVSGVIPDSLARIRSLDSVDLSHNSLTGPIPNSFSDLPNLRSLDLRSNKLTGCIPAGLVQGQFRSLILSYNQLTGPIPRDDAQDEINTVDLSHNRLTGDASFLFAAGRPIGKVDLSWNDLDFDLSKLVFPPELTYLDLSHNRIRGTVPRSLAALSTLQTLDLSYNRLCGPLPRLHGVIRHGCKPYEHNQCAGGAPLGGCHQS.

A signal peptide spans 1–24 (MASTASFMLAVLLAVAVAAAPARA). 2 cysteine pairs are disulfide-bonded: Cys-27-Cys-58 and Cys-59-Cys-66. 10 LRR repeats span residues 72 to 96 (VNNV…GLTA), 97 to 118 (LMSL…CLTA), 119 to 142 (LSNL…SLAR), 143 to 166 (IRSL…SFSD), 167 to 192 (LPNL…VQGQ), 193 to 215 (FRSL…AQDE), 216 to 236 (INTV…LFAA), 237 to 259 (GRPI…KLVF), 260 to 283 (PPEL…SLAA), and 284 to 310 (LSTL…VIRH). Residue Asn-131 is glycosylated (N-linked (GlcNAc...) asparagine). Disulfide bonds link Cys-298–Cys-312, Cys-298–Cys-320, and Cys-320–Cys-329.

This sequence belongs to the polygalacturonase-inhibiting protein family. As to expression, highly expressed in calli, immature and mature panicles, and in three inner floral organs: lodicules, stamens and carpels. Expressed at low level in seedling roots and mature stems.

It localises to the secreted. The protein localises to the cell wall. In terms of biological role, inhibitor of fungal polygalacturonase. Regulates floral organ number. This is Polygalacturonase inhibitor 1 from Oryza sativa subsp. japonica (Rice).